The chain runs to 565 residues: Cytokinin dehydrogenase 2 (565 aa).

Positions 1 to 20 are cleaved as a signal peptide; sequence MKQEQVRMAVLLMLNCFVKA. An N-linked (GlcNAc...) asparagine glycan is attached at N64. Residues 74 to 255 enclose the FAD-binding PCMH-type domain; that stretch reads RLAAAAAVLY…TRARIPLAPA (182 aa). FAD is bound by residues A108, G110, and G112. H113 is subject to Pros-8alpha-FAD histidine. Positions 114, 118, 179, 184, 190, 194, and 245 each coordinate FAD. N464 carries N-linked (GlcNAc...) asparagine glycosylation. 3 residues coordinate FAD: Y517, S554, and Q557.

This sequence belongs to the oxygen-dependent FAD-linked oxidoreductase family. Monomer. The cofactor is FAD. Glycosylated. In terms of tissue distribution, mostly expressed in leaves, culms, inflorescence meristems, and flowers, especially in vascular tissues.

It localises to the secreted. Its subcellular location is the extracellular space. The catalysed reaction is N(6)-dimethylallyladenine + A + H2O = 3-methyl-2-butenal + adenine + AH2. Catalyzes the oxidation of cytokinins, a family of N(6)-substituted adenine derivatives that are plant hormones, where the substituent is an isopentenyl group. Is a major QTL involved in grain yield. Modulates the number of reproductive organs by regulating the cytokinin accumulation in inflorescence meristems. Acts as negative regulator of panicle branching. The chain is Cytokinin dehydrogenase 2 from Oryza sativa subsp. japonica (Rice).